A 263-amino-acid chain; its full sequence is Probable WRKY transcription factor 62 (263 aa).

The interval 59–104 is disordered; sequence DHQDDQSNNSSPQDSSPVLESSRKPLHKRGRKTSMAESSDYHRHES. The segment covering 64-74 has biased composition (low complexity); the sequence is QSNNSSPQDSS. The segment at residues 104 to 174 is a DNA-binding region (WRKY); sequence SSTPIYHDGF…GQHICQLHQA (71 aa).

It belongs to the WRKY group III family.

It is found in the nucleus. Its function is as follows. Transcription factor. Interacts specifically with the W box (5'-(T)TGAC[CT]-3'), a frequently occurring elicitor-responsive cis-acting element. The protein is Probable WRKY transcription factor 62 (WRKY62) of Arabidopsis thaliana (Mouse-ear cress).